Reading from the N-terminus, the 81-residue chain is Probable antitoxin MazE2 (81 aa).

In terms of assembly, forms a complex with cognate toxin MazF2.

Functionally, antitoxin component of a type II toxin-antitoxin (TA) system. The sequence is that of Probable antitoxin MazE2 (mazE2) from Mycobacterium tuberculosis (strain ATCC 25618 / H37Rv).